The following is a 199-amino-acid chain: uncharacterized protein (199 aa).

To U.parvum UU376.

This is an uncharacterized protein from Ureaplasma parvum serovar 3 (strain ATCC 700970).